The primary structure comprises 336 residues: UPF0324 membrane protein lp_2841 (336 aa).

The next 9 helical transmembrane spans lie at 5–22 (GILP…ISQG), 26–48 (FVPA…NTFL), 84–106 (IGGF…ALWL), 116–138 (VRML…IAPV), 150–172 (ITLV…MAVF), 204–226 (TVQF…VLIF), 255–277 (WYVA…AIIG), 282–304 (TISS…LVNF), and 311–333 (LALY…ITLL).

It belongs to the UPF0324 family.

The protein localises to the cell membrane. The sequence is that of UPF0324 membrane protein lp_2841 from Lactiplantibacillus plantarum (strain ATCC BAA-793 / NCIMB 8826 / WCFS1) (Lactobacillus plantarum).